The following is a 135-amino-acid chain: Class I hydrophobin dewA (135 aa).

Residues Met-1 to Ala-18 form the signal peptide. Cystine bridges form between Cys-44-Cys-114, Cys-51-Cys-108, Cys-52-Cys-84, and Cys-115-Cys-122. Residue Asn-60 is glycosylated (N-linked (GlcNAc...) asparagine).

It belongs to the fungal hydrophobin family. As to quaternary structure, forms homodimers at high concentrations, and these dimers are off-pathway to rodlet formation. Dissociation of the dimers into monomers, with resultant exposure of the hydrophobic face, is necessary for self-assembly to form functional amyloid fibrils called rodlets. Self-assembly into fibrillar rodlets occurs spontaneously at hydrophobic:hydrophilic interfaces and the rodlets further associate laterally to form amphipathic monolayers.

It localises to the secreted. It is found in the spore wall. Aerial growth, conidiation, and dispersal of filamentous fungi in the environment rely upon a capability of their secreting small amphipathic proteins called hydrophobins (HPBs) with low sequence identity. Class I can self-assemble into an outermost layer of rodlet bundles on aerial cell surfaces, conferring cellular hydrophobicity that supports fungal growth, development and dispersal; whereas Class II form highly ordered films at water-air interfaces through intermolecular interactions but contribute nothing to the rodlet structure. DewA is a class I hydrophobin that contributes to spore wall hydrophobicity. In Emericella nidulans (strain FGSC A4 / ATCC 38163 / CBS 112.46 / NRRL 194 / M139) (Aspergillus nidulans), this protein is Class I hydrophobin dewA.